The primary structure comprises 367 residues: D-alanine--D-alanine ligase (367 aa).

The ATP-grasp domain maps to 145–351; that stretch reads KRLLRDAGLP…QPALMDELVA (207 aa). Position 174 to 229 (174 to 229) interacts with ATP; that stretch reads RAVGSSELFVKPANLGSSVGISKTRDAAEFEAACQLALRFDRKILIERCIAPVREI. Mg(2+) contacts are provided by aspartate 306, glutamate 318, and asparagine 320.

The protein belongs to the D-alanine--D-alanine ligase family. The cofactor is Mg(2+). Requires Mn(2+) as cofactor.

The protein resides in the cytoplasm. It catalyses the reaction 2 D-alanine + ATP = D-alanyl-D-alanine + ADP + phosphate + H(+). Its pathway is cell wall biogenesis; peptidoglycan biosynthesis. In terms of biological role, cell wall formation. In Bradyrhizobium sp. (strain ORS 278), this protein is D-alanine--D-alanine ligase.